The primary structure comprises 649 residues: Exolysin (649 aa).

A helical transmembrane segment spans residues 37-57 (LIYTIIVLVVAAVVGLVIFIV). Residues 184-268 (KDIIDNKLRE…KKATDDFKKK (85 aa)) adopt a coiled-coil conformation. Positions 258–275 (AKKATDDFKKKKQADKNK) are enriched in basic and acidic residues. The interval 258–325 (AKKATDDFKK…QFQTRDSKGQ (68 aa)) is disordered. Over residues 278–312 (ASKPSPGPKPAPKPSPGPKPAPKPSPGPKPSPGPS) the composition is skewed to pro residues. Positions 407 to 649 (GGGGGGGNVS…KNVKISKWSP (243 aa)) are catalytic.

The cofactor is Ca(2+). Mg(2+) is required as a cofactor.

Its subcellular location is the membrane. The protein localises to the virion. Inhibited by Mn(2+), Cu(2+), Co(2+), Fe(2+), Zn(2+), Ni(2+), EDTA and EGTA. Its function is as follows. During viral entry, involved in the degradation of the host cell wall at the site of attachment. In Chlorella (PBCV-1), this protein is Exolysin.